Here is a 272-residue protein sequence, read N- to C-terminus: 2-dehydro-3-deoxyphosphooctonate aldolase (272 aa).

It belongs to the KdsA family.

The protein localises to the cytoplasm. The enzyme catalyses D-arabinose 5-phosphate + phosphoenolpyruvate + H2O = 3-deoxy-alpha-D-manno-2-octulosonate-8-phosphate + phosphate. Its pathway is carbohydrate biosynthesis; 3-deoxy-D-manno-octulosonate biosynthesis; 3-deoxy-D-manno-octulosonate from D-ribulose 5-phosphate: step 2/3. It functions in the pathway bacterial outer membrane biogenesis; lipopolysaccharide biosynthesis. The polypeptide is 2-dehydro-3-deoxyphosphooctonate aldolase (Geobacter sulfurreducens (strain ATCC 51573 / DSM 12127 / PCA)).